Reading from the N-terminus, the 514-residue chain is Peptide chain release factor 3 (514 aa).

The region spanning 8–268 is the tr-type G domain; the sequence is KKRRTFAIIS…TFLKFAPEPH (261 aa). Residues 17–24, 85–89, and 139–142 contribute to the GTP site; these read SHPDAGKT, DTPGH, and NKLD.

This sequence belongs to the TRAFAC class translation factor GTPase superfamily. Classic translation factor GTPase family. PrfC subfamily.

The protein localises to the cytoplasm. Increases the formation of ribosomal termination complexes and stimulates activities of RF-1 and RF-2. It binds guanine nucleotides and has strong preference for UGA stop codons. It may interact directly with the ribosome. The stimulation of RF-1 and RF-2 is significantly reduced by GTP and GDP, but not by GMP. In Streptococcus pneumoniae serotype 19F (strain G54), this protein is Peptide chain release factor 3.